We begin with the raw amino-acid sequence, 117 residues long: Large ribosomal subunit protein bL19 (117 aa).

The protein belongs to the bacterial ribosomal protein bL19 family.

Functionally, this protein is located at the 30S-50S ribosomal subunit interface and may play a role in the structure and function of the aminoacyl-tRNA binding site. This chain is Large ribosomal subunit protein bL19, found in Alkaliphilus metalliredigens (strain QYMF).